Consider the following 190-residue polypeptide: dITP/XTP pyrophosphatase (190 aa).

Residue 7–12 (THNPNK) participates in substrate binding. Positions 39 and 68 each coordinate Mg(2+). Asp68 serves as the catalytic Proton acceptor. Substrate is bound by residues Thr69, 148-151 (FGYD), Lys171, and 176-177 (HR).

This sequence belongs to the HAM1 NTPase family. As to quaternary structure, homodimer. Requires Mg(2+) as cofactor.

It catalyses the reaction XTP + H2O = XMP + diphosphate + H(+). The catalysed reaction is dITP + H2O = dIMP + diphosphate + H(+). The enzyme catalyses ITP + H2O = IMP + diphosphate + H(+). Functionally, pyrophosphatase that catalyzes the hydrolysis of nucleoside triphosphates to their monophosphate derivatives, with a high preference for the non-canonical purine nucleotides XTP (xanthosine triphosphate), dITP (deoxyinosine triphosphate) and ITP. Seems to function as a house-cleaning enzyme that removes non-canonical purine nucleotides from the nucleotide pool, thus preventing their incorporation into DNA/RNA and avoiding chromosomal lesions. The protein is dITP/XTP pyrophosphatase of Christiangramia forsetii (strain DSM 17595 / CGMCC 1.15422 / KT0803) (Gramella forsetii).